Consider the following 632-residue polypeptide: MRNALASFGQIVLAAVVASGVAAVSLIAIARVHWPAFPSSNQLHALTTVGQVGCLTGLLAVGGVWQAGRFRRLAQLGGLVFVSAFTVVTLGMPLGATKLYLFGISVDQQFRTEYLTRLTDSAALQDMTYLGLPPFYPPGWFWIGGRVAALTGTPAWEIFKPWAITSITIAVAITLVLWWQMIRFEYALLVTIATAAVTLVYSSPEPYAAMITVLLPPALVLTWSGLRAAEREADRTLGNKRGWATVVGAGIFLGFAATWYTLLLAYTAFTVVLMTLLLATALCRRAGFRATFDPLRRLAGIVVIAAAIGAITWLPFLARAAHDPVSDTGSAQHYLPADGAELAFPMLQFSLLGMICMLGTLWLIVRTSSSVRASALMISVLAVYLWSLLSILTTLARTTLLSFRLQPTLTVLLVTAGVFGFIETAQSLAKHNRAVLSVASAIGLAGAIAFSQDIPNVLRPDLTIAYTDTDGHGQRGDRRPPGSEKYYWAIDEAVLHITGKPRDQTVVLTADYSFLAYYPYWGFQGLTSHYANPLAQFDLRAAQIQQWSRLTTASELIHALDTLPWPPPTVFVMRHGAGNTYTLRLAKNVYPNQPNVRRYTVDLPAALFADQRFAVQDIGPFVLAIRKPMGNA.

Transmembrane regions (helical) follow at residues 10 to 30 (QIVL…IAIA), 45 to 65 (ALTT…GGVW), 76 to 96 (LGGL…PLGA), 162 to 182 (WAIT…WQMI), 184 to 204 (FEYA…YSSP), 206 to 226 (PYAA…WSGL), 242 to 259 (GWAT…AATW), 263 to 282 (LLAY…ATAL), 298 to 318 (LAGI…PFLA), 344 to 364 (FPML…LWLI), 375 to 395 (ALMI…LTTL), 409 to 429 (LTVL…QSLA), and 434 to 454 (AVLS…SQDI). The Extracellular portion of the chain corresponds to 455-632 (PNVLRPDLTI…LAIRKPMGNA (178 aa)).

This sequence belongs to the glycosyltransferase 85 family.

It localises to the cell membrane. It catalyses the reaction Adds an alpha-D-arabinofuranosyl group from trans,octacis-decaprenylphospho-beta-D-arabinofuranose at the 5-O-position of the eighth, tenth and twelfth galactofuranose unit of the galactofuranan chain of [beta-D-galactofuranosyl-(1-&gt;5)-beta-D-galactofuranosyl-(1-&gt;6)]14-beta-D-galactofuranosyl-(1-&gt;5)-beta-D-galactofuranosyl-(1-&gt;4)-alpha-L-rhamnopyranosyl-(1-&gt;3)-N-acetyl-alpha-D-glucosaminyl-diphospho-trans,octacis-decaprenol.. It participates in cell wall biogenesis; cell wall polysaccharide biosynthesis. Functionally, involved in the biosynthesis of the arabinogalactan (AG) region of the mycolylarabinogalactan-peptidoglycan (mAGP) complex, an essential component of the mycobacterial cell wall. Catalyzes the addition of the first key arabinofuranosyl (Araf) residue from the sugar donor decaprenyl-phospho-arabinose (DPA) on the C-5 of a 6-linked galactofuranosyl (Galf) of the galactan domain, thus 'priming' the galactan for further elaboration by other arabinofuranosyltransferases. This Mycobacterium leprae (strain TN) protein is Galactan 5-O-arabinofuranosyltransferase.